The sequence spans 84 residues: Small ribosomal subunit protein bS18 (84 aa).

It belongs to the bacterial ribosomal protein bS18 family. Part of the 30S ribosomal subunit. Forms a tight heterodimer with protein bS6.

Functionally, binds as a heterodimer with protein bS6 to the central domain of the 16S rRNA, where it helps stabilize the platform of the 30S subunit. The protein is Small ribosomal subunit protein bS18 of Helicobacter hepaticus (strain ATCC 51449 / 3B1).